A 486-amino-acid chain; its full sequence is Aspartyl/glutamyl-tRNA(Asn/Gln) amidotransferase subunit B (486 aa).

The protein belongs to the GatB/GatE family. GatB subfamily. Heterotrimer of A, B and C subunits.

It carries out the reaction L-glutamyl-tRNA(Gln) + L-glutamine + ATP + H2O = L-glutaminyl-tRNA(Gln) + L-glutamate + ADP + phosphate + H(+). The enzyme catalyses L-aspartyl-tRNA(Asn) + L-glutamine + ATP + H2O = L-asparaginyl-tRNA(Asn) + L-glutamate + ADP + phosphate + 2 H(+). Its function is as follows. Allows the formation of correctly charged Asn-tRNA(Asn) or Gln-tRNA(Gln) through the transamidation of misacylated Asp-tRNA(Asn) or Glu-tRNA(Gln) in organisms which lack either or both of asparaginyl-tRNA or glutaminyl-tRNA synthetases. The reaction takes place in the presence of glutamine and ATP through an activated phospho-Asp-tRNA(Asn) or phospho-Glu-tRNA(Gln). The sequence is that of Aspartyl/glutamyl-tRNA(Asn/Gln) amidotransferase subunit B from Azoarcus sp. (strain BH72).